The primary structure comprises 320 residues: Glucokinase (320 aa).

12-17 (GDIGGT) contributes to the ATP binding site.

Belongs to the bacterial glucokinase family.

It localises to the cytoplasm. The catalysed reaction is D-glucose + ATP = D-glucose 6-phosphate + ADP + H(+). The polypeptide is Glucokinase (Nitrobacter hamburgensis (strain DSM 10229 / NCIMB 13809 / X14)).